A 342-amino-acid polypeptide reads, in one-letter code: Phosphoribosylformylglycinamidine cyclo-ligase (342 aa).

The protein belongs to the AIR synthase family.

Its subcellular location is the cytoplasm. The enzyme catalyses 2-formamido-N(1)-(5-O-phospho-beta-D-ribosyl)acetamidine + ATP = 5-amino-1-(5-phospho-beta-D-ribosyl)imidazole + ADP + phosphate + H(+). Its pathway is purine metabolism; IMP biosynthesis via de novo pathway; 5-amino-1-(5-phospho-D-ribosyl)imidazole from N(2)-formyl-N(1)-(5-phospho-D-ribosyl)glycinamide: step 2/2. The chain is Phosphoribosylformylglycinamidine cyclo-ligase from Staphylococcus aureus (strain MRSA252).